The following is a 281-amino-acid chain: Apulose-4-phosphate transketolase subunit A (281 aa).

This sequence belongs to the transketolase family. In terms of assembly, probable heterodimer composed of AptA and AptB. Requires thiamine diphosphate as cofactor.

It carries out the reaction apulose 4-phosphate + D-glyceraldehyde 3-phosphate = D-xylulose 5-phosphate + dihydroxyacetone phosphate. It functions in the pathway carbohydrate metabolism. Functionally, involved in catabolism of D-apiose. Catalyzes the transfer of the glycolaldehyde group from apulose-4-phosphate to D-glyceraldehyde 3-phosphate, generating dihydroxyacetone phosphate and D-xylulose-5-phosphate. The sequence is that of Apulose-4-phosphate transketolase subunit A from Phocaeicola vulgatus (strain ATCC 8482 / DSM 1447 / JCM 5826 / CCUG 4940 / NBRC 14291 / NCTC 11154) (Bacteroides vulgatus).